The following is a 651-amino-acid chain: Endo-1,4-beta-xylanase A (651 aa).

Residues 1–30 (MKRKVKKMAAMATSIIMAIMIILHSIPVLA) form the signal peptide. Residues 33 to 227 (IIYDNETGTH…SSGYANVYKN (195 aa)) enclose the GH11 domain. Glu-124 acts as the Nucleophile in catalysis. The Proton donor role is filled by Glu-214. 3 consecutive CBM6 domains span residues 250–370 (SIIE…FIFS), 387–507 (SIIQ…FVFT), and 527–647 (SNIQ…FVFS). 2 residues coordinate Ca(2+): Glu-253 and Glu-255. Residue Thr-270 participates in D-xylotriose binding. Arg-275 lines the Ca(2+) pocket. The stretch at 278-339 (GYIENGNTVT…SSTGSWNTYQ (62 aa)) is repeat 1. The tract at residues 278 to 616 (GYIENGNTVT…GSTGSFDTYR (339 aa)) is 3 X 61 AA approximate repeats. Residues Tyr-279, Asn-336, and Asn-363 each contribute to the D-xylotriose site. The D-xylobiose site is built by Tyr-279, Asn-336, and Asn-363. Asp-365 is a binding site for Ca(2+). Copy 2 of the repeat occupies 415–476 (GYIENGYSTT…PSTNSWDSYQ (62 aa)). The Ca(2+) site is built by Gln-530, Glu-532, and Ser-552. Repeat unit 3 spans residues 555–616 (GYIENGYSTT…GSTGSFDTYR (62 aa)). D-xylotriose contacts are provided by Tyr-556, Asp-613, and Asn-640. Position 642 (Asp-642) interacts with Ca(2+).

Belongs to the glycosyl hydrolase 11 (cellulase G) family.

It localises to the secreted. It catalyses the reaction Endohydrolysis of (1-&gt;4)-beta-D-xylosidic linkages in xylans.. It functions in the pathway glycan degradation; xylan degradation. Endoxylanase that degrades arabinoxylan and glucuronoxylan to xylobiose and xylotriose (in vitro). This chain is Endo-1,4-beta-xylanase A (xynA), found in Thermoclostridium stercorarium (Clostridium stercorarium).